A 772-amino-acid chain; its full sequence is Protein transport protein SEC23 F (772 aa).

Positions 65, 68, 87, and 90 each coordinate Zn(2+). A zinc finger-like region spans residues 65-90 (CKTCKALLNAFARVDFAAMNWVCPFC).

The protein belongs to the SEC23/SEC24 family. SEC23 subfamily. In terms of assembly, component of the coat protein complex II (COPII), composed of at least five proteins: the Sec23/24 complex, the Sec13/31 complex and Sar1. Interacts with SEC24A.

The protein localises to the cytoplasmic vesicle. It localises to the COPII-coated vesicle membrane. The protein resides in the endoplasmic reticulum membrane. It is found in the membrane. Functionally, component of the coat protein complex II (COPII) which promotes the formation of transport vesicles from the endoplasmic reticulum (ER). The coat has two main functions, the physical deformation of the endoplasmic reticulum membrane into vesicles and the selection of cargo molecules. The sequence is that of Protein transport protein SEC23 F from Arabidopsis thaliana (Mouse-ear cress).